The following is a 151-amino-acid chain: Large ribosomal subunit protein bL9 (151 aa).

This sequence belongs to the bacterial ribosomal protein bL9 family.

Binds to the 23S rRNA. The protein is Large ribosomal subunit protein bL9 of Nitrosococcus oceani (strain ATCC 19707 / BCRC 17464 / JCM 30415 / NCIMB 11848 / C-107).